The following is a 327-amino-acid chain: 2-keto-3-deoxygluconate permease (327 aa).

10 helical membrane passes run 10–30 (IPGG…TFSP), 42–62 (GMIT…GASI), 73–93 (KSGT…AIAS), 95–115 (IIPE…LALV), 139–159 (AGAF…IILG), 163–183 (IASF…VGFA), 199–219 (VQTL…LTVI), 224–244 (LLGI…LIIA), 254–274 (TAGI…VLIA), and 289–309 (SLVA…TSIW).

This sequence belongs to the KdgT transporter family.

It is found in the cell inner membrane. The catalysed reaction is 2-dehydro-3-deoxy-D-gluconate(in) + H(+)(in) = 2-dehydro-3-deoxy-D-gluconate(out) + H(+)(out). In terms of biological role, catalyzes the proton-dependent uptake of 2-keto-3-deoxygluconate (KDG) into the cell. The sequence is that of 2-keto-3-deoxygluconate permease from Escherichia coli O7:K1 (strain IAI39 / ExPEC).